Consider the following 576-residue polypeptide: Arginine--tRNA ligase (576 aa).

The 'HIGH' region signature appears at 126-136; it reads ANPTGPMHIGH.

Belongs to the class-I aminoacyl-tRNA synthetase family. In terms of assembly, monomer.

It localises to the cytoplasm. The catalysed reaction is tRNA(Arg) + L-arginine + ATP = L-arginyl-tRNA(Arg) + AMP + diphosphate. The chain is Arginine--tRNA ligase from Rickettsia peacockii (strain Rustic).